A 732-amino-acid chain; its full sequence is Engulfment and cell motility protein 2 (732 aa).

A Phosphotyrosine modification is found at Tyr48. Residues 323–497 (AQRDIIFELR…VVREQITRAL (175 aa)) form the ELMO domain. At Ser515 the chain carries Phosphoserine. The 122-residue stretch at 565–686 (SSFRKIGNRR…LLGKDMSSEL (122 aa)) folds into the PH domain. Positions 712–719 (PEAPPPVP) match the SH3-binding motif. Tyr729 carries the phosphotyrosine modification.

Interacts directly with the SH3-domain of DOCK1 via its SH3-binding site. Probably forms a heterotrimeric complex with DOCK1 and RAC1. Interacts with ARHGEF16, DOCK4 and EPHA2; mediates activation of RAC1 by EPHA2. Interacts with ADGRB3. Interacts with AUTS2; the interaction is direct.

It is found in the cytoplasm. It localises to the cytosol. Its subcellular location is the membrane. Involved in cytoskeletal rearrangements required for phagocytosis of apoptotic cells and cell motility. Acts in association with DOCK1 and CRK. Was initially proposed to be required in complex with DOCK1 to activate Rac Rho small GTPases. May enhance the guanine nucleotide exchange factor (GEF) activity of DOCK1. The chain is Engulfment and cell motility protein 2 (Elmo2) from Mus musculus (Mouse).